The chain runs to 220 residues: Deoxyribose-phosphate aldolase 1 (220 aa).

Aspartate 89 (proton donor/acceptor) is an active-site residue. Lysine 151 acts as the Schiff-base intermediate with acetaldehyde in catalysis. The active-site Proton donor/acceptor is lysine 180.

Belongs to the DeoC/FbaB aldolase family. DeoC type 1 subfamily.

Its subcellular location is the cytoplasm. The enzyme catalyses 2-deoxy-D-ribose 5-phosphate = D-glyceraldehyde 3-phosphate + acetaldehyde. It participates in carbohydrate degradation; 2-deoxy-D-ribose 1-phosphate degradation; D-glyceraldehyde 3-phosphate and acetaldehyde from 2-deoxy-alpha-D-ribose 1-phosphate: step 2/2. Catalyzes a reversible aldol reaction between acetaldehyde and D-glyceraldehyde 3-phosphate to generate 2-deoxy-D-ribose 5-phosphate. This is Deoxyribose-phosphate aldolase 1 from Staphylococcus aureus (strain MRSA252).